Reading from the N-terminus, the 36-residue chain is U-metritoxin-Msn1a (36 aa).

A ShKT domain is found at 4-36 (CKDKLPACGEYRGSFCKLEKVKSNCEKTCGVKC). 3 disulfides stabilise this stretch: C4–C36, C11–C28, and C19–C32.

It belongs to the sea anemone type 1 potassium channel toxin family. Type 1b subfamily.

It is found in the secreted. Its subcellular location is the nematocyst. Its function is as follows. Has hemolytic activity. Inhibits voltage-gated potassium channels (Kv1/KCNA). The chain is U-metritoxin-Msn1a from Metridium senile (Brown sea anemone).